The primary structure comprises 147 residues: Large ribosomal subunit protein uL13 (147 aa).

Belongs to the universal ribosomal protein uL13 family. In terms of assembly, part of the 50S ribosomal subunit.

Functionally, this protein is one of the early assembly proteins of the 50S ribosomal subunit, although it is not seen to bind rRNA by itself. It is important during the early stages of 50S assembly. The protein is Large ribosomal subunit protein uL13 of Leuconostoc mesenteroides subsp. mesenteroides (strain ATCC 8293 / DSM 20343 / BCRC 11652 / CCM 1803 / JCM 6124 / NCDO 523 / NBRC 100496 / NCIMB 8023 / NCTC 12954 / NRRL B-1118 / 37Y).